A 468-amino-acid polypeptide reads, in one-letter code: Glycosyl hydrolase family 109 protein (468 aa).

An N-terminal signal peptide occupies residues 1-19 (MVYKVFLSLCIGLALSASA). Residues 67-68 (MR), Asp89, 138-141 (WKTH), 158-159 (EV), and Asn187 contribute to the NAD(+) site. Substrate contacts are provided by residues Tyr216, Arg232, 244–247 (YATH), and Tyr322. Tyr244 contacts NAD(+).

The protein belongs to the Gfo/Idh/MocA family. Glycosyl hydrolase 109 subfamily. Requires NAD(+) as cofactor.

Functionally, glycosidase. This chain is Glycosyl hydrolase family 109 protein, found in Porphyromonas gingivalis (strain ATCC BAA-308 / W83).